Consider the following 151-residue polypeptide: Deoxyuridine 5'-triphosphate nucleotidohydrolase (151 aa).

Residues 70-72, asparagine 83, 87-89, and methionine 97 contribute to the substrate site; these read RSG and LID.

This sequence belongs to the dUTPase family. Mg(2+) is required as a cofactor.

It carries out the reaction dUTP + H2O = dUMP + diphosphate + H(+). It participates in pyrimidine metabolism; dUMP biosynthesis; dUMP from dCTP (dUTP route): step 2/2. Functionally, this enzyme is involved in nucleotide metabolism: it produces dUMP, the immediate precursor of thymidine nucleotides and it decreases the intracellular concentration of dUTP so that uracil cannot be incorporated into DNA. The polypeptide is Deoxyuridine 5'-triphosphate nucleotidohydrolase (Tolumonas auensis (strain DSM 9187 / NBRC 110442 / TA 4)).